Reading from the N-terminus, the 770-residue chain is ATP-dependent RNA helicase HCA4 (770 aa).

The short motif at K41–A69 is the Q motif element. The 175-residue stretch at I72 to V246 folds into the Helicase ATP-binding domain. A85–T92 contributes to the ATP binding site. The DEAD box motif lies at D194 to D197. Residues K278–L437 form the Helicase C-terminal domain. A phosphoserine mark is found at S692, S710, S714, and S743. The disordered stretch occupies residues G705–H724.

It belongs to the DEAD box helicase family. DDX10/DBP4 subfamily. As to quaternary structure, interacts with the U3 and U14 snoRNAs. Associates with pre-ribosomal complexes.

Its subcellular location is the nucleus. The protein resides in the nucleolus. The catalysed reaction is ATP + H2O = ADP + phosphate + H(+). In terms of biological role, ATP-dependent RNA helicase required for ribosome biogenesis. Involved in the release of U14 snoRNA in pre-ribosomal complexes. Required for pre-rRNA cleavage at site A2. The sequence is that of ATP-dependent RNA helicase HCA4 (HCA4) from Saccharomyces cerevisiae (strain ATCC 204508 / S288c) (Baker's yeast).